A 91-amino-acid chain; its full sequence is Small ribosomal subunit protein bS18 (91 aa).

It belongs to the bacterial ribosomal protein bS18 family. Part of the 30S ribosomal subunit. Forms a tight heterodimer with protein bS6.

Functionally, binds as a heterodimer with protein bS6 to the central domain of the 16S rRNA, where it helps stabilize the platform of the 30S subunit. This Burkholderia ambifaria (strain MC40-6) protein is Small ribosomal subunit protein bS18.